The following is a 439-amino-acid chain: Protein dumpy-20 (439 aa).

The interval 93-116 (GTLSDPSLHGSNSSSSTSDVGSSV) is disordered. Residues 96–116 (SDPSLHGSNSSSSTSDVGSSV) are compositionally biased toward low complexity. BED-type zinc fingers lie at residues 135–184 (PTEN…YQKV) and 349–398 (KTEH…YNDV). Residues Cys154, Cys157, His172, His177, Cys368, Cys371, His386, and His391 each contribute to the Zn(2+) site.

Functionally, involved in cuticle function and is essential for normal morphological development. The sequence is that of Protein dumpy-20 (dpy-20) from Caenorhabditis briggsae.